Reading from the N-terminus, the 306-residue chain is Aspartate carbamoyltransferase catalytic subunit (306 aa).

Carbamoyl phosphate-binding residues include R55 and T56. K84 is an L-aspartate binding site. Carbamoyl phosphate contacts are provided by R105, H133, and Q136. Residues R166 and R227 each contribute to the L-aspartate site. Residues L265 and P266 each coordinate carbamoyl phosphate.

This sequence belongs to the aspartate/ornithine carbamoyltransferase superfamily. ATCase family. In terms of assembly, heterododecamer (2C3:3R2) of six catalytic PyrB chains organized as two trimers (C3), and six regulatory PyrI chains organized as three dimers (R2).

The catalysed reaction is carbamoyl phosphate + L-aspartate = N-carbamoyl-L-aspartate + phosphate + H(+). It functions in the pathway pyrimidine metabolism; UMP biosynthesis via de novo pathway; (S)-dihydroorotate from bicarbonate: step 2/3. Catalyzes the condensation of carbamoyl phosphate and aspartate to form carbamoyl aspartate and inorganic phosphate, the committed step in the de novo pyrimidine nucleotide biosynthesis pathway. In Neisseria meningitidis serogroup C / serotype 2a (strain ATCC 700532 / DSM 15464 / FAM18), this protein is Aspartate carbamoyltransferase catalytic subunit.